A 508-amino-acid polypeptide reads, in one-letter code: Matrix metalloproteinase-19 (508 aa).

The first 18 residues, 1 to 18, serve as a signal peptide directing secretion; the sequence is MNCQQLWLGFLLPMTVSG. A propeptide spanning residues 19-97 is cleaved from the precursor; that stretch reads RVLGLAEVAP…EDPFNQKTLK (79 aa). Residues 83-90 carry the Cysteine switch motif; that stretch reads PRCGLEDP. Cys-85 and His-212 together coordinate Zn(2+). The active site involves Glu-213. Zn(2+) is bound by residues His-216 and His-222. Residues 262 to 288 form a disordered region; it reads IRDEEEEETELPTVPPVPTEPSPMPDP. Positions 274–287 are enriched in pro residues; sequence TVPPVPTEPSPMPD. 4 Hemopexin repeats span residues 286–333, 334–380, 381–425, and 426–472; these read PDPC…WEGL, PGNL…EPNL, DAAL…FTGV, and PNQP…WMHC. An intrachain disulfide couples Cys-289 to Cys-472. The N-linked (GlcNAc...) asparagine glycan is linked to Asn-464.

This sequence belongs to the peptidase M10A family. It depends on Zn(2+) as a cofactor. Ca(2+) is required as a cofactor. In terms of processing, activated by autolytic cleavage after Lys-97. Tyrosine phosphorylated by PKDCC/VLK. As to expression, expressed in mammary gland, placenta, lung, pancreas, ovary, small intestine, spleen, thymus, prostate, testis colon, heart and blood vessel walls. Not detected in brain and peripheral blood leukocytes. Also expressed in the synovial fluid of normal and rheumatoid patients.

It localises to the secreted. Its subcellular location is the extracellular space. The protein resides in the extracellular matrix. With respect to regulation, strongly inhibited by TIMP-2, TIMP-3 and TIMP-4, while TIMP-1 is less efficient. Its function is as follows. Endopeptidase that degrades various components of the extracellular matrix, such as aggrecan and cartilage oligomeric matrix protein (comp), during development, haemostasis and pathological conditions (arthritic disease). May also play a role in neovascularization or angiogenesis. Hydrolyzes collagen type IV, laminin, nidogen, nascin-C isoform, fibronectin, and type I gelatin. The protein is Matrix metalloproteinase-19 (MMP19) of Homo sapiens (Human).